A 218-amino-acid chain; its full sequence is Adenylate kinase (218 aa).

Residue 10-15 coordinates ATP; it reads GAGKGT. Residues 30–59 form an NMP region; that stretch reads STGDMLRAAVKAGTPLGLEAKKVMDAGGLV. AMP contacts are provided by residues threonine 31, arginine 36, 57-59, 85-88, and glutamine 92; these read GLV and GFPR. An LID region spans residues 122 to 159; it reads GRRVHVASGRTYHVKFNPPKVAGKDDETGEDLIQRADD. ATP is bound by residues arginine 123 and 132–133; that span reads TY. Positions 156 and 167 each coordinate AMP. Glycine 203 lines the ATP pocket.

The protein belongs to the adenylate kinase family. In terms of assembly, monomer.

The protein localises to the cytoplasm. The catalysed reaction is AMP + ATP = 2 ADP. It participates in purine metabolism; AMP biosynthesis via salvage pathway; AMP from ADP: step 1/1. Its function is as follows. Catalyzes the reversible transfer of the terminal phosphate group between ATP and AMP. Plays an important role in cellular energy homeostasis and in adenine nucleotide metabolism. This chain is Adenylate kinase, found in Laribacter hongkongensis (strain HLHK9).